We begin with the raw amino-acid sequence, 843 residues long: Protein P (843 aa).

A terminal protein domain (TP) region spans residues 1–177; the sequence is MPLSYPHFRK…FCGSPYSWEQ (177 aa). Residues 178 to 346 are spacer; that stretch reads ELQHGSTSLN…YCLSHIINLL (169 aa). Disordered stretches follow at residues 228–259 and 283–314; these read KQGQLANGKQGRSGRLRSRVHTPTRWPAGVEP and EKANPSLSTSKRHTSTGNAVELNPVPPSSVGS. The segment covering 239 to 249 has biased composition (basic residues); that stretch reads RSGRLRSRVHT. The tract at residues 347 to 690 is polymerase/reverse transcriptase domain (RT); that stretch reads EDWGPCYEHG…YMNLYPVARQ (344 aa). In terms of domain architecture, Reverse transcriptase spans 357–600; sequence QHYIRTPRTP…YSLHFMGYVI (244 aa). Positions 429, 551, and 552 each coordinate Mg(2+).

It belongs to the hepadnaviridae P protein family.

It carries out the reaction DNA(n) + a 2'-deoxyribonucleoside 5'-triphosphate = DNA(n+1) + diphosphate. The catalysed reaction is Endonucleolytic cleavage to 5'-phosphomonoester.. Activated by host HSP70 and HSP40 in vitro to be able to bind the epsilon loop of the pgRNA. Because deletion of the RNase H region renders the protein partly chaperone-independent, the chaperones may be needed indirectly to relieve occlusion of the RNA-binding site by this domain. Inhibited by several reverse-transcriptase inhibitors: Lamivudine, Adefovir and Entecavir. Functionally, multifunctional enzyme that converts the viral RNA genome into dsDNA in viral cytoplasmic capsids. This enzyme displays a DNA polymerase activity that can copy either DNA or RNA templates, and a ribonuclease H (RNase H) activity that cleaves the RNA strand of RNA-DNA heteroduplexes in a partially processive 3'- to 5'-endonucleasic mode. Neo-synthesized pregenomic RNA (pgRNA) are encapsidated together with the P protein, and reverse-transcribed inside the nucleocapsid. Initiation of reverse-transcription occurs first by binding the epsilon loop on the pgRNA genome, and is initiated by protein priming, thereby the 5'-end of (-)DNA is covalently linked to P protein. Partial (+)DNA is synthesized from the (-)DNA template and generates the relaxed circular DNA (RC-DNA) genome. After budding and infection, the RC-DNA migrates in the nucleus, and is converted into a plasmid-like covalently closed circular DNA (cccDNA). The activity of P protein does not seem to be necessary for cccDNA generation, and is presumably released from (+)DNA by host nuclear DNA repair machinery. The polypeptide is Protein P (Homo sapiens (Human)).